A 268-amino-acid polypeptide reads, in one-letter code: Thiazole synthase (268 aa).

The active-site Schiff-base intermediate with DXP is K96. 1-deoxy-D-xylulose 5-phosphate contacts are provided by residues G157, 185-186, and 207-208; these read AG and NT. Residues 238-268 are disordered; sequence PMRPREAASPSSPVEGVPFTPTGPRPGRGPQ. Over residues 258 to 268 the composition is skewed to pro residues; that stretch reads PTGPRPGRGPQ.

The protein belongs to the ThiG family. As to quaternary structure, homotetramer. Forms heterodimers with either ThiH or ThiS.

It localises to the cytoplasm. The enzyme catalyses [ThiS sulfur-carrier protein]-C-terminal-Gly-aminoethanethioate + 2-iminoacetate + 1-deoxy-D-xylulose 5-phosphate = [ThiS sulfur-carrier protein]-C-terminal Gly-Gly + 2-[(2R,5Z)-2-carboxy-4-methylthiazol-5(2H)-ylidene]ethyl phosphate + 2 H2O + H(+). Its pathway is cofactor biosynthesis; thiamine diphosphate biosynthesis. Its function is as follows. Catalyzes the rearrangement of 1-deoxy-D-xylulose 5-phosphate (DXP) to produce the thiazole phosphate moiety of thiamine. Sulfur is provided by the thiocarboxylate moiety of the carrier protein ThiS. In vitro, sulfur can be provided by H(2)S. The sequence is that of Thiazole synthase from Thermus thermophilus (strain ATCC BAA-163 / DSM 7039 / HB27).